Here is a 367-residue protein sequence, read N- to C-terminus: MTSERIRVAILFGGRSAEHDVSRASAANIFRSLDAGRYALTLIGITHDGRWVLADAVNDATSAALIVPADGPQIVLLPAGRGRALAIDGSAAAPRELAFDVIFPVLHGPNGEDGTVQGALELADVAYVGGRVLGSAAAMDKDVAKRLLRDAGLPIVPFVTMTAASPVSYDDAARAVGSSELFVKPANLGSSVGISKTRDAAEFEAACQLALRFDRKILIERCIAPVREIECAVLEHADGQIKASELGEIVPANSHGFYSYEAKYTDANGAALHVPAQVEPAVAQRIRKMATEVFGALCCESLARVDFFVRGDEIYVNEVNTLPGFTNISMYPKMWEAAGLPQPALMDELVAHALARHARLRELASQR.

One can recognise an ATP-grasp domain in the interval 145–351; sequence KRLLRDAGLP…QPALMDELVA (207 aa). 174–229 serves as a coordination point for ATP; it reads RAVGSSELFVKPANLGSSVGISKTRDAAEFEAACQLALRFDRKILIERCIAPVREI. Positions 306, 318, and 320 each coordinate Mg(2+).

It belongs to the D-alanine--D-alanine ligase family. Requires Mg(2+) as cofactor. It depends on Mn(2+) as a cofactor.

It localises to the cytoplasm. The catalysed reaction is 2 D-alanine + ATP = D-alanyl-D-alanine + ADP + phosphate + H(+). It functions in the pathway cell wall biogenesis; peptidoglycan biosynthesis. Cell wall formation. In Bradyrhizobium sp. (strain ORS 278), this protein is D-alanine--D-alanine ligase.